A 282-amino-acid polypeptide reads, in one-letter code: Glucuronoxylan 4-O-methyltransferase 1 (282 aa).

A helical transmembrane segment spans residues 13–33 (VLLVFLLATLILIFIVRSTLT).

This sequence belongs to the methyltransferase superfamily. As to expression, expressed in rosette leaves, stems, flowers and siliques.

The protein resides in the golgi apparatus membrane. The enzyme catalyses glucuronoxylan D-glucuronate + n S-adenosyl-L-methionine = glucuronoxylan 4-O-methyl-D-glucuronate + n S-adenosyl-L-homocysteine + n H(+). In terms of biological role, methyltransferase catalyzing 4-O-methylation of glucuronic acid side chains on xylan. The protein is Glucuronoxylan 4-O-methyltransferase 1 (GXM1) of Arabidopsis thaliana (Mouse-ear cress).